A 577-amino-acid polypeptide reads, in one-letter code: Putative pseudouridine synthase B0024.11 (577 aa).

Asp-188 serves as the catalytic Nucleophile. The TRUD domain occupies 265–472; that stretch reads GFINYFGTQR…GESSRCLFVE (208 aa). The segment covering 538 to 565 has biased composition (basic and acidic residues); it reads KAMRDASFKTRGDDEKTEENVLEEKGSD. Residues 538 to 577 form a disordered region; the sequence is KAMRDASFKTRGDDEKTEENVLEEKGSDDANELNLVSEDQ.

This sequence belongs to the pseudouridine synthase TruD family.

It carries out the reaction a uridine in tRNA = a pseudouridine in tRNA. This chain is Putative pseudouridine synthase B0024.11, found in Caenorhabditis elegans.